The sequence spans 1342 residues: DNA-directed RNA polymerase subunit beta (1342 aa).

This sequence belongs to the RNA polymerase beta chain family. In terms of assembly, the RNAP catalytic core consists of 2 alpha, 1 beta, 1 beta' and 1 omega subunit. When a sigma factor is associated with the core the holoenzyme is formed, which can initiate transcription.

The enzyme catalyses RNA(n) + a ribonucleoside 5'-triphosphate = RNA(n+1) + diphosphate. Its function is as follows. DNA-dependent RNA polymerase catalyzes the transcription of DNA into RNA using the four ribonucleoside triphosphates as substrates. The sequence is that of DNA-directed RNA polymerase subunit beta from Yersinia pseudotuberculosis serotype O:1b (strain IP 31758).